A 74-amino-acid polypeptide reads, in one-letter code: ATP synthase subunit c (74 aa).

A run of 2 helical transmembrane segments spans residues 8 to 28 (FIGT…VSNI) and 52 to 72 (IGAG…MLLI).

The protein belongs to the ATPase C chain family. As to quaternary structure, F-type ATPases have 2 components, F(1) - the catalytic core - and F(0) - the membrane proton channel. F(1) has five subunits: alpha(3), beta(3), gamma(1), delta(1), epsilon(1). F(0) has three main subunits: a(1), b(2) and c(10-14). The alpha and beta chains form an alternating ring which encloses part of the gamma chain. F(1) is attached to F(0) by a central stalk formed by the gamma and epsilon chains, while a peripheral stalk is formed by the delta and b chains.

It is found in the cell inner membrane. Functionally, f(1)F(0) ATP synthase produces ATP from ADP in the presence of a proton or sodium gradient. F-type ATPases consist of two structural domains, F(1) containing the extramembraneous catalytic core and F(0) containing the membrane proton channel, linked together by a central stalk and a peripheral stalk. During catalysis, ATP synthesis in the catalytic domain of F(1) is coupled via a rotary mechanism of the central stalk subunits to proton translocation. Its function is as follows. Key component of the F(0) channel; it plays a direct role in translocation across the membrane. A homomeric c-ring of between 10-14 subunits forms the central stalk rotor element with the F(1) delta and epsilon subunits. This chain is ATP synthase subunit c, found in Rickettsia conorii (strain ATCC VR-613 / Malish 7).